The sequence spans 324 residues: Alkanal monooxygenase beta chain (324 aa).

It belongs to the bacterial luciferase oxidoreductase family. As to quaternary structure, heterodimer of an alpha and a beta chain.

It catalyses the reaction a long-chain fatty aldehyde + FMNH2 + O2 = a long-chain fatty acid + hnu + FMN + H2O + 2 H(+). Functionally, light-emitting reaction in luminous bacteria. The specific role of the beta subunit is unknown, but it is absolutely required for bioluminescence activity. This chain is Alkanal monooxygenase beta chain (luxB), found in Photorhabdus laumondii subsp. laumondii (strain DSM 15139 / CIP 105565 / TT01) (Photorhabdus luminescens subsp. laumondii).